A 1068-amino-acid chain; its full sequence is Carbamoyl phosphate synthase large chain (1068 aa).

The segment at methionine 1–glutamate 401 is carboxyphosphate synthetic domain. Residues arginine 129, arginine 169, glycine 175, glycine 176, lysine 208, valine 210, glutamate 215, glycine 241, isoleucine 242, histidine 243, glutamine 284, and glutamate 298 each coordinate ATP. An ATP-grasp 1 domain is found at arginine 133–leucine 327. 3 residues coordinate Mg(2+): glutamine 284, glutamate 298, and asparagine 300. 3 residues coordinate Mn(2+): glutamine 284, glutamate 298, and asparagine 300. The segment at isoleucine 402–valine 549 is oligomerization domain. The tract at residues glutamate 550 to asparagine 932 is carbamoyl phosphate synthetic domain. The 191-residue stretch at aspartate 674–leucine 864 folds into the ATP-grasp 2 domain. ATP is bound by residues arginine 710, lysine 749, leucine 751, glutamate 755, glycine 780, valine 781, histidine 782, serine 783, glutamine 823, and glutamate 835. Glutamine 823, glutamate 835, and asparagine 837 together coordinate Mg(2+). Mn(2+) is bound by residues glutamine 823, glutamate 835, and asparagine 837. One can recognise an MGS-like domain in the interval methionine 933–asparagine 1068. An allosteric domain region spans residues methionine 933–asparagine 1068.

Belongs to the CarB family. In terms of assembly, composed of two chains; the small (or glutamine) chain promotes the hydrolysis of glutamine to ammonia, which is used by the large (or ammonia) chain to synthesize carbamoyl phosphate. Tetramer of heterodimers (alpha,beta)4. The cofactor is Mg(2+). Mn(2+) is required as a cofactor.

It catalyses the reaction hydrogencarbonate + L-glutamine + 2 ATP + H2O = carbamoyl phosphate + L-glutamate + 2 ADP + phosphate + 2 H(+). The enzyme catalyses hydrogencarbonate + NH4(+) + 2 ATP = carbamoyl phosphate + 2 ADP + phosphate + 2 H(+). It participates in amino-acid biosynthesis; L-arginine biosynthesis; carbamoyl phosphate from bicarbonate: step 1/1. The protein operates within pyrimidine metabolism; UMP biosynthesis via de novo pathway; (S)-dihydroorotate from bicarbonate: step 1/3. Its function is as follows. Large subunit of the glutamine-dependent carbamoyl phosphate synthetase (CPSase). CPSase catalyzes the formation of carbamoyl phosphate from the ammonia moiety of glutamine, carbonate, and phosphate donated by ATP, constituting the first step of 2 biosynthetic pathways, one leading to arginine and/or urea and the other to pyrimidine nucleotides. The large subunit (synthetase) binds the substrates ammonia (free or transferred from glutamine from the small subunit), hydrogencarbonate and ATP and carries out an ATP-coupled ligase reaction, activating hydrogencarbonate by forming carboxy phosphate which reacts with ammonia to form carbamoyl phosphate. This Clostridium botulinum (strain Loch Maree / Type A3) protein is Carbamoyl phosphate synthase large chain.